We begin with the raw amino-acid sequence, 333 residues long: Leukocyte cell-derived chemotaxin 1 (333 aa).

A helical membrane pass occupies residues 42–62 (VGAVVLISGAVLLLFGAIGAF). Residues 104–201 (GSGAEEAIEV…LCGDLPIFWL (98 aa)) form the BRICHOS domain. A disulfide bridge links C131 with C193. The propeptide occupies 211-214 (RERR). The tract at residues 212–269 (ERREVVRKTVPTTTKRPHSGPRGNPGPARMRNDSRPSVQEDSEPFNPDNPYHQEGESM) is disordered. N243 carries an N-linked (GlcNAc...) asparagine glycan. 4 disulfide bridges follow: C281–C285, C282–C322, C292–C316, and C296–C312.

The protein belongs to the chondromodulin-1 family. After cleavage, the post-translationally modified ChM-I is secreted as a glycoprotein.

The protein resides in the secreted. It localises to the extracellular space. It is found in the extracellular matrix. Its subcellular location is the endomembrane system. In terms of biological role, bifunctional growth regulator that stimulates the growth of cultured chondrocytes in the presence of basic fibroblast growth factor (FGF) but inhibits the growth of cultured vascular endothelial cells. May contribute to the rapid growth of cartilage and vascular invasion prior to the replacement of cartilage by bone during endochondral bone development. Inhibits in vitro tube formation and mobilization of endothelial cells. Plays a role as antiangiogenic factor in cardiac valves to suppress neovascularization. The polypeptide is Leukocyte cell-derived chemotaxin 1 (Oryctolagus cuniculus (Rabbit)).